The primary structure comprises 898 residues: Chloride channel protein 2 (898 aa).

Position 2 is an N-acetylalanine (A2). Topologically, residues 2–87 are cytoplasmic; the sequence is AAAAAEEGME…RCHKFLVSRV (86 aa). The interval 16–34 is essential for channel gating by both voltage and cell volume; that stretch reads QYEQTLMYGRYTQDLGAFA. Phosphothreonine is present on T20. The interval 36–49 is modulates channel gating by both voltage and cell volume; sequence EEAARIRLGGPEPW. The next 2 helical transmembrane spans lie at 88–121 and 130–155; these read GEDW…AQQW and ILLQ…TQIL. A Selectivity filter part_1 motif is present at residues 161–165; that stretch reads GSGIP. Chloride is bound at residue S162. Positions 164–171 form an intramembrane region, helical; the sequence is IPEMKTIL. 2 helical membrane passes run 180–198 and 205–223; these read LTLK…ALGS and EGPF…SKFL. The Selectivity filter part_2 signature appears at 203 to 207; that stretch reads GKEGP. 2 intramembrane regions (helical) span residues 239-251 and 255-263; these read MLAA…VGCC and PIGGVLFSI. A run of 5 helical transmembrane segments spans residues 275–295, 321–349, 358–377, 429–449, and 457–480; these read YWRG…LAVW, LPAF…VQVM, FLMR…ISTL, ANVF…SALA, and GAFM…MAAW. A Selectivity filter part_3 motif is present at residues 457-461; sequence GAFMP. F459 is a binding site for chloride. The helical intramembrane region spans 497–511; it reads GGYAVVGAAALAGAV. The segment at residues 512 to 513 is an intramembrane region (note=Loop between two helices); sequence TH. The helical intramembrane region spans 514 to 525; it reads TVSTAVIVFELT. The segment at residues 526–530 is an intramembrane region (note=Loop between two helices); sequence GQIAH. Residues 531 to 548 form a helical membrane-spanning segment; that stretch reads ILPVMIAVILANAVAQSL. The Cytoplasmic portion of the chain corresponds to 549–898; sequence QPSLYDSIIR…SPSDSDDKCQ (350 aa). Y553 lines the chloride pocket. Positions 584–642 constitute a CBS 1 domain; sequence MVRDVPHVALSCTFRDLRLALHRTKGRMLALVESPESMILLGSIERSQVVALLGAQLSP. Disordered regions lie at residues 643–672 and 686–717; these read ARRR…PEAS and AARG…TGSA. A compositionally biased stretch (polar residues) spans 705 to 717; that stretch reads VTRNLGESPTGSA. S712 and S758 each carry phosphoserine. Positions 790–850 constitute a CBS 2 domain; it reads IDPAPFQLVE…GSVTAQGVKV (61 aa). The short motif at 812–813 is the Basolateral membrane sorting element; sequence LL. The interval 856 to 898 is disordered; that stretch reads SFRDSATSSSDTETTEVHALWGPHSRHGLPREGSPSDSDDKCQ.

It belongs to the chloride channel (TC 2.A.49) family. ClC-2/CLCN2 subfamily. Homodimer. Interacts with auxiliary subunit HEPACAM. Phosphorylated. Activated by dephosphorylation. In terms of tissue distribution, ubiquitously expressed. Moderately expressed in aortic and coronary vascular smooth muscle cells and expressed at a low level in aortic endothelial cells. Expressed in the adrenal gland, predominantly in the zona glomerulosa. Expressed in white mater perivascular astrocytes and ependymal cells (at protein level).

It localises to the cell membrane. The protein resides in the basolateral cell membrane. It is found in the cell projection. Its subcellular location is the dendritic spine membrane. The protein localises to the axon. The catalysed reaction is chloride(in) = chloride(out). It catalyses the reaction thiocyanate(in) = thiocyanate(out). The enzyme catalyses bromide(in) = bromide(out). It carries out the reaction nitrate(in) = nitrate(out). The catalysed reaction is iodide(out) = iodide(in). Its activity is regulated as follows. Common gate kinetics are down-regulated by intracellular ATP. Inhibited by AK-42, a derivative of meclofenamate. Inhibited by Cd(2+). Inhibited by Zn(2+) and PKC activation. Inhibited at acidic pH. CCLN2:HEPACAM channel conductance is up-regulated upon hypo-osmolarity. Functionally, voltage-gated and osmosensitive chloride channel. Forms a homodimeric channel where each subunit has its own ion conduction pathway. Conducts double-barreled currents controlled by two types of gates, two fast glutamate gates that control each subunit independently and a slow common gate that opens and shuts off both subunits simultaneously. Displays inward rectification currents activated upon membrane hyperpolarization and extracellular hypotonicity. Contributes to chloride conductance involved in neuron excitability. In hippocampal neurons, generates a significant part of resting membrane conductance and provides an additional chloride efflux pathway to prevent chloride accumulation in dendrites upon GABA receptor activation. In glia, associates with the auxiliary subunit HEPACAM/GlialCAM at astrocytic processes and myelinated fiber tracts where it may regulate transcellular chloride flux buffering extracellular chloride and potassium concentrations. Regulates aldosterone production in adrenal glands. The opening of CLCN2 channels at hyperpolarized membrane potentials in the glomerulosa causes cell membrane depolarization, activation of voltage-gated calcium channels and increased expression of aldosterone synthase, the rate-limiting enzyme for aldosterone biosynthesis. Contributes to chloride conductance in retinal pigment epithelium involved in phagocytosis of shed photoreceptor outer segments and photoreceptor renewal. Conducts chloride currents at the basolateral membrane of epithelial cells with a role in chloride reabsorption rather than secretion. Permeable to small monovalent anions with chloride &gt; thiocyanate &gt; bromide &gt; nitrate &gt; iodide ion selectivity. This is Chloride channel protein 2 from Homo sapiens (Human).